We begin with the raw amino-acid sequence, 89 residues long: Small ribosomal subunit protein bS20 (89 aa).

Residues 1-28 form a disordered region; sequence MTLANIKSAKKRAIQSEKRRQHNASQRS.

It belongs to the bacterial ribosomal protein bS20 family.

Its function is as follows. Binds directly to 16S ribosomal RNA. In Pasteurella multocida (strain Pm70), this protein is Small ribosomal subunit protein bS20.